The chain runs to 727 residues: Centrosomal protein kizuna (727 aa).

The interval 1 to 20 is disordered; it reads MTERSGRGGGTRGASALPSP. The stretch at 77–124 forms a coiled coil; that stretch reads KNARIRNQEYLKQFERIQANITASLEKLQELKIEFETQIKKMQLLSKD. Disordered stretches follow at residues 176-226, 271-456, and 564-727; these read DFTT…NKSD, EGKK…FTNL, and RLAV…PRTP. The span at 198–223 shows a compositional bias: polar residues; sequence HQQTAQSSDVTGSRVVQTPGDTQCLN. Over residues 286-324 the composition is skewed to basic and acidic residues; it reads LSPENRTTDLKCDSSRRSEGSEGEILTREHIEVEEERAR. Residue Ser-328 is modified to Phosphoserine. Basic and acidic residues predominate over residues 343–359; the sequence is PQEKPPARKASSDHLPC. Low complexity predominate over residues 380-390; sequence LSSSSDLTVSV. Thr-387 is modified (phosphothreonine; by PLK1). The segment covering 442–455 has biased composition (polar residues); sequence APSTPDSPNESFTN. Residues 569 to 583 are compositionally biased toward low complexity; the sequence is SSKSSCSLPSTPSDE. Positions 603–613 are enriched in acidic residues; that stretch reads QEDESREESTE. Residues 631–642 show a composition bias toward polar residues; it reads LKQSALQGSTHQ. Composition is skewed to low complexity over residues 659 to 669 and 677 to 689; these read GLKTGSGTFKT and SEASFSSSEGSPL. Residues Ser-711, Ser-714, and Ser-716 each carry the phosphoserine modification.

It belongs to the kizuna family. As to quaternary structure, interacts with AKAP9, CEP72, ODF2, PCNT and TUBGCP2. Phosphorylation at Thr-387 by PLK1 is not needed for centrosomal localization or pericentriolar material expansion but is indispensable for spindle-pole stabilization.

It is found in the cytoplasm. The protein resides in the cytoskeleton. Its subcellular location is the microtubule organizing center. It localises to the centrosome. The protein localises to the cilium basal body. Centrosomal protein required for establishing a robust mitotic centrosome architecture that can endure the forces that converge on the centrosomes during spindle formation. Required for stabilizing the expanded pericentriolar material around the centriole. The protein is Centrosomal protein kizuna (KIZ) of Bos taurus (Bovine).